We begin with the raw amino-acid sequence, 897 residues long: Pre-mRNA-splicing factor CWC22 homolog (897 aa).

Over residues 1–10 the composition is skewed to polar residues; sequence MSSSRSQSPE. The segment at 1–155 is disordered; the sequence is MSSSRSQSPE…EKKKKEPLDI (155 aa). 3 stretches are compositionally biased toward basic and acidic residues: residues 36–54, 93–107, and 131–155; these read SSEKSASRSQSPRESREVS, RSKETRESESPEKSP, and RSSERKQSEEPAPLPEKKKKEPLDI. One can recognise an MIF4G domain in the interval 194–382; it reads KKKIHGLVNR…ETAMQIRKDK (189 aa). Positions 444–472 are disordered; it reads NADISDEDGGDELDDEEEGSDVEEAPKKT. The segment covering 447–466 has biased composition (acidic residues); sequence ISDEDGGDELDDEEEGSDVE. Residues 485-601 form the MI domain; it reads AFRREVYLTM…DWKILADMKM (117 aa). 2 stretches are compositionally biased toward low complexity: residues 689-710 and 720-730; these read LDQLKAESSSDSSSSSDSSDSS and DSSSDSSSSSE. The disordered stretch occupies residues 689-897; it reads LDQLKAESSS…VESDDRRRRR (209 aa). The segment covering 743-897 has biased composition (basic and acidic residues); that stretch reads NSEESSKKKE…VESDDRRRRR (155 aa).

It belongs to the CWC22 family. In terms of tissue distribution, expressed in germ cells, oocytes, and sperm cells.

It is found in the nucleus. The protein localises to the nucleus speckle. Its function is as follows. Required for pre-mRNA splicing and for exon-junction complex (EJC) assembly. Hinders EIF4A3 from non-specifically binding RNA and escorts it to the splicing machinery to promote EJC assembly on mature mRNAs. Through its role in EJC assembly, required for nonsense-mediated mRNA decay. Plays a role in the nuclear retention of unspliced mRNAs. Plays a role in sex determination. Required for early embryogenesis and tissue differentiation. This Caenorhabditis elegans protein is Pre-mRNA-splicing factor CWC22 homolog.